Consider the following 646-residue polypeptide: Nucleoside triphosphatase I (646 aa).

Residues Phe48–Asn213 enclose the Helicase ATP-binding domain. Trp61–Thr68 provides a ligand contact to ATP. Positions Asp151–His154 match the DEXH box motif. Positions Tyr377–Lys540 constitute a Helicase C-terminal domain. The segment at Asp466–Ile532 is binding to the cap-specific mRNA (nucleoside-2'-O-)-methyltransferase.

Belongs to the helicase family. NPH I subfamily. Monomer. Interacts (via C-terminus) with RAP94 (via N-terminus). Interacts with the cap-specific mRNA (nucleoside-2'-O-)-methyltransferase.

The protein resides in the virion. The catalysed reaction is a ribonucleoside 5'-triphosphate + H2O = a ribonucleoside 5'-diphosphate + phosphate + H(+). DNA-dependent ATPase required for providing the needed energy to achieve the termination of early transcripts. Acts in concert with the RAP94 subunit of the virion RNA polymerase and the capping enzyme/VTF to catalyze release of UUUUUNU-containing nascent RNA from the elongation complex. NPH-I must bind ssDNA in order to exhibit ATPase activity. The sequence is that of Nucleoside triphosphatase I (NPH1) from Heliothis armigera entomopoxvirus (HaEPV).